Consider the following 309-residue polypeptide: tRNA dimethylallyltransferase (309 aa).

Residue 10 to 17 (GPTASGKT) participates in ATP binding. Position 12-17 (12-17 (TASGKT)) interacts with substrate. 2 interaction with substrate tRNA regions span residues 35–38 (DSAL) and 240–245 (RCVGYR).

It belongs to the IPP transferase family. Monomer. Requires Mg(2+) as cofactor.

It carries out the reaction adenosine(37) in tRNA + dimethylallyl diphosphate = N(6)-dimethylallyladenosine(37) in tRNA + diphosphate. Its function is as follows. Catalyzes the transfer of a dimethylallyl group onto the adenine at position 37 in tRNAs that read codons beginning with uridine, leading to the formation of N6-(dimethylallyl)adenosine (i(6)A). In Baumannia cicadellinicola subsp. Homalodisca coagulata, this protein is tRNA dimethylallyltransferase.